Here is a 366-residue protein sequence, read N- to C-terminus: uncharacterized protein (366 aa).

6 consecutive transmembrane segments (helical) span residues 30 to 50 (FWTYMLFYLQFLVGINGAVGI), 66 to 86 (IIIAFLALVNILLSLIGIIVI), 136 to 156 (IFISIFIGIYMISVIALGYLA), 162 to 182 (IILFGTGFFIIVVIIYFLDLL), 198 to 218 (IGVVLFISFIPPLMNYFIYDI), and 225 to 245 (YIPESFIVAMIVILIFVIIDV).

It is found in the cell membrane. This is an uncharacterized protein from Methanocaldococcus jannaschii (strain ATCC 43067 / DSM 2661 / JAL-1 / JCM 10045 / NBRC 100440) (Methanococcus jannaschii).